Consider the following 103-residue polypeptide: UPF0145 protein PERMA_0324 (103 aa).

It belongs to the UPF0145 family.

This chain is UPF0145 protein PERMA_0324, found in Persephonella marina (strain DSM 14350 / EX-H1).